The primary structure comprises 232 residues: Large ribosomal subunit protein uL1 (232 aa).

The protein belongs to the universal ribosomal protein uL1 family. Part of the 50S ribosomal subunit.

Binds directly to 23S rRNA. The L1 stalk is quite mobile in the ribosome, and is involved in E site tRNA release. Its function is as follows. Protein L1 is also a translational repressor protein, it controls the translation of the L11 operon by binding to its mRNA. This is Large ribosomal subunit protein uL1 from Francisella tularensis subsp. holarctica (strain LVS).